Reading from the N-terminus, the 259-residue chain is Triosephosphate isomerase (259 aa).

A substrate-binding site is contributed by 10–12; the sequence is NWK. His102 serves as the catalytic Electrophile. The active-site Proton acceptor is Glu174. Residues Gly180, Ser220, and 241–242 each bind substrate; that span reads GG.

This sequence belongs to the triosephosphate isomerase family. In terms of assembly, homodimer.

The protein localises to the cytoplasm. The enzyme catalyses D-glyceraldehyde 3-phosphate = dihydroxyacetone phosphate. The protein operates within carbohydrate biosynthesis; gluconeogenesis. It functions in the pathway carbohydrate degradation; glycolysis; D-glyceraldehyde 3-phosphate from glycerone phosphate: step 1/1. Functionally, involved in the gluconeogenesis. Catalyzes stereospecifically the conversion of dihydroxyacetone phosphate (DHAP) to D-glyceraldehyde-3-phosphate (G3P). This Cutibacterium acnes (strain DSM 16379 / KPA171202) (Propionibacterium acnes) protein is Triosephosphate isomerase.